The following is a 274-amino-acid chain: Large ribosomal subunit protein uL2 (274 aa).

Residues 221–254 (RGTAMNPADHPHGGGEGRTFGKHPVSPWGLPTKG) are disordered.

It belongs to the universal ribosomal protein uL2 family. As to quaternary structure, part of the 50S ribosomal subunit. Forms a bridge to the 30S subunit in the 70S ribosome.

One of the primary rRNA binding proteins. Required for association of the 30S and 50S subunits to form the 70S ribosome, for tRNA binding and peptide bond formation. It has been suggested to have peptidyltransferase activity; this is somewhat controversial. Makes several contacts with the 16S rRNA in the 70S ribosome. In Sulfurihydrogenibium sp. (strain YO3AOP1), this protein is Large ribosomal subunit protein uL2.